The chain runs to 152 residues: Ribonuclease pancreatic gamma-type (152 aa).

An N-terminal signal peptide occupies residues 1–25; the sequence is MGLEKSFILFSLLVLVLGCVQPSLV. The disordered stretch occupies residues 26-48; it reads GESKESPSEKFKRRHMDEEGPYQ. Residues 27-43 show a composition bias toward basic and acidic residues; it reads ESKESPSEKFKRRHMDE. Residues Lys35 and Arg38 each coordinate substrate. The active-site Proton acceptor is the His40. 4 disulfide bridges follow: Cys54/Cys112, Cys68/Cys123, Cys86/Cys138, and Cys93/Cys100. Substrate is bound by residues 69 to 73 and Lys94; that span reads KPLNT. The active-site Proton donor is His147.

This sequence belongs to the pancreatic ribonuclease family. As to quaternary structure, monomer.

The protein resides in the secreted. It catalyses the reaction an [RNA] containing cytidine + H2O = an [RNA]-3'-cytidine-3'-phosphate + a 5'-hydroxy-ribonucleotide-3'-[RNA].. It carries out the reaction an [RNA] containing uridine + H2O = an [RNA]-3'-uridine-3'-phosphate + a 5'-hydroxy-ribonucleotide-3'-[RNA].. In terms of biological role, endonuclease that catalyzes the cleavage of RNA on the 3' side of pyrimidine nucleotides. Acts on single-stranded and double-stranded RNA. The chain is Ribonuclease pancreatic gamma-type from Rattus fuscipes (Bush rat).